Reading from the N-terminus, the 445-residue chain is Chromosome partition protein MukF (445 aa).

The interval 213 to 241 (LSETSSTLRELQDTLQAASDELQTQILDI) is leucine-zipper.

This sequence belongs to the MukF family. In terms of assembly, interacts, and probably forms a ternary complex, with MukE and MukB via its C-terminal region. The complex formation is stimulated by calcium or magnesium. It is required for an interaction between MukE and MukB.

It is found in the cytoplasm. It localises to the nucleoid. In terms of biological role, involved in chromosome condensation, segregation and cell cycle progression. May participate in facilitating chromosome segregation by condensation DNA from both sides of a centrally located replisome during cell division. Not required for mini-F plasmid partitioning. Probably acts via its interaction with MukB and MukE. Overexpression results in anucleate cells. It has a calcium binding activity. In Vibrio campbellii (strain ATCC BAA-1116), this protein is Chromosome partition protein MukF.